The chain runs to 263 residues: Small ribosomal subunit protein eS4 (263 aa).

An S4 RNA-binding domain is found at 42–104 (LPLIVFLRNR…TGEHFRLVYD (63 aa)).

It belongs to the eukaryotic ribosomal protein eS4 family.

The protein is Small ribosomal subunit protein eS4 (RPS4Y1) of Gorilla gorilla gorilla (Western lowland gorilla).